Reading from the N-terminus, the 312-residue chain is DNA-directed RNA polymerase subunit alpha (312 aa).

Residues 1 to 227 are alpha N-terminal domain (alpha-NTD); sequence MNNFYIKCLK…SFFSSLLENK (227 aa). Positions 243 to 312 are alpha C-terminal domain (alpha-CTD); sequence PKNPHTNIAI…KNKLGIVLSN (70 aa).

It belongs to the RNA polymerase alpha chain family. In plastids the minimal PEP RNA polymerase catalytic core is composed of four subunits: alpha, beta, beta', and beta''. When a (nuclear-encoded) sigma factor is associated with the core the holoenzyme is formed, which can initiate transcription.

Its subcellular location is the plastid. It is found in the chloroplast. The enzyme catalyses RNA(n) + a ribonucleoside 5'-triphosphate = RNA(n+1) + diphosphate. Its function is as follows. DNA-dependent RNA polymerase catalyzes the transcription of DNA into RNA using the four ribonucleoside triphosphates as substrates. This Trieres chinensis (Marine centric diatom) protein is DNA-directed RNA polymerase subunit alpha.